The primary structure comprises 156 residues: MPRRRVVGQRKILPDPKFNSELLAKFINVIMQDGKKSTAEKIIYKALDTVAEKKSEDHLVILEAALENVRPSVEVKSRRVGGSTYQVPCEVRPVRRNALGMRWLVEAARKRGEKSMALRLAGELLDASENKGTAVKKREDVHRMAEANKAFAHYRW.

Belongs to the universal ribosomal protein uS7 family. In terms of assembly, part of the 30S ribosomal subunit. Contacts proteins S9 and S11.

Functionally, one of the primary rRNA binding proteins, it binds directly to 16S rRNA where it nucleates assembly of the head domain of the 30S subunit. Is located at the subunit interface close to the decoding center, probably blocks exit of the E-site tRNA. The chain is Small ribosomal subunit protein uS7 from Shewanella woodyi (strain ATCC 51908 / MS32).